A 308-amino-acid polypeptide reads, in one-letter code: Follistatin-related protein 1 (308 aa).

The N-terminal stretch at 1 to 20 (MWKRWLALALALVAVAWVRA) is a signal peptide. The 24-residue stretch at 30 to 53 (ICANVFCGAGRECAVTEKGEPTCL) folds into the Follistatin-like domain. 5 disulfides stabilise this stretch: C31–C42, C36–C52, C54–C84, C58–C77, and C66–C98. In terms of domain architecture, Kazal-like spans 48 to 100 (GEPTCLCIEQCKPHKRPVCGSNGKTYLNHCELHRDACLTGSKIQVDYDGHCKE). N144 is a glycosylation site (N-linked (GlcNAc...) asparagine). Positions 144–178 (NYSEILDKYFKNFDNGDSRLDSSEFLKFVEQNETA) constitute an EF-hand 1 domain. S165 carries the post-translational modification Phosphoserine. 2 N-linked (GlcNAc...) asparagine glycosylation sites follow: N175 and N180. One can recognise an EF-hand 2 domain in the interval 193–228 (LRGLCVDALIELSDENADWKLSFQEFLKCLNPSFNP). One can recognise a VWFC domain in the interval 233–287 (CALEDETYADGAETEVDCNRCVCACGNWVCTAMTCDGKNQKGAQTQTEEEMTRYV).

As to quaternary structure, homodimer. Interacts with SCN10A. Interacts with DIP2A; DIP2A may act as a cell surface receptor for FSTL1. Interacts with BMP4. Interacts with CD14; this interaction promotes TL4-mediated signaling cascade.

Its subcellular location is the secreted. Secreted glycoprotein that is involved in various physiological processes, such as angiogenesis, regulation of the immune response, cell proliferation and differentiation. Plays a role in the development of the central nervous system, skeletal system, lungs, and ureter. Promotes endothelial cell survival, migration and differentiation into network structures in an AKT-dependent manner. Also promotes survival of cardiac myocytes. Initiates various signaling cascades by activating different receptors on the cell surface such as DIP2A, TLR4 or BMP receptors. This Macaca fascicularis (Crab-eating macaque) protein is Follistatin-related protein 1 (FSTL1).